Here is a 434-residue protein sequence, read N- to C-terminus: Trigger factor (434 aa).

Residues 161–246 (EDRVVIDFTG…VKQVQAPVLP (86 aa)) enclose the PPIase FKBP-type domain.

The protein belongs to the FKBP-type PPIase family. Tig subfamily.

It is found in the cytoplasm. It catalyses the reaction [protein]-peptidylproline (omega=180) = [protein]-peptidylproline (omega=0). Functionally, involved in protein export. Acts as a chaperone by maintaining the newly synthesized protein in an open conformation. Functions as a peptidyl-prolyl cis-trans isomerase. The protein is Trigger factor of Dechloromonas aromatica (strain RCB).